Consider the following 546-residue polypeptide: CTP synthase (546 aa).

The tract at residues 1–269 is amidoligase domain; sequence MNPNTKIIFV…DAKLVELLNL (269 aa). S16 contributes to the CTP binding site. UTP is bound at residue S16. Residues 17–22 and D74 contribute to the ATP site; that span reads SLGKGV. Mg(2+)-binding residues include D74 and E143. CTP is bound by residues 150-152, 190-195, and K226; these read DIE and KTKPTQ. UTP is bound by residues 190–195 and K226; that span reads KTKPTQ. One can recognise a Glutamine amidotransferase type-1 domain in the interval 294-546; sequence TIAMVGKYVS…IHAAVEKSNK (253 aa). G356 serves as a coordination point for L-glutamine. The Nucleophile; for glutamine hydrolysis role is filled by C383. L-glutamine contacts are provided by residues 384–387, E407, and R474; that span reads LGMQ. Catalysis depends on residues H519 and E521.

It belongs to the CTP synthase family. Homotetramer.

The catalysed reaction is UTP + L-glutamine + ATP + H2O = CTP + L-glutamate + ADP + phosphate + 2 H(+). It carries out the reaction L-glutamine + H2O = L-glutamate + NH4(+). The enzyme catalyses UTP + NH4(+) + ATP = CTP + ADP + phosphate + 2 H(+). Its pathway is pyrimidine metabolism; CTP biosynthesis via de novo pathway; CTP from UDP: step 2/2. Allosterically activated by GTP, when glutamine is the substrate; GTP has no effect on the reaction when ammonia is the substrate. The allosteric effector GTP functions by stabilizing the protein conformation that binds the tetrahedral intermediate(s) formed during glutamine hydrolysis. Inhibited by the product CTP, via allosteric rather than competitive inhibition. Its function is as follows. Catalyzes the ATP-dependent amination of UTP to CTP with either L-glutamine or ammonia as the source of nitrogen. Regulates intracellular CTP levels through interactions with the four ribonucleotide triphosphates. The protein is CTP synthase of Francisella philomiragia subsp. philomiragia (strain ATCC 25017 / CCUG 19701 / FSC 153 / O#319-036).